Reading from the N-terminus, the 163-residue chain is Protein YtsP (163 aa).

This sequence belongs to the free Met sulfoxide reductase family.

The chain is Protein YtsP (ytsP) from Bacillus subtilis (strain 168).